A 979-amino-acid chain; its full sequence is UPF0182 protein MRA_0066 (979 aa).

7 helical membrane-spanning segments follow: residues 19–39 (LVTA…LVDI), 63–83 (LAIV…ALLL), 114–134 (LFGW…ASFD), 174–194 (WLFV…YLFG), 211–231 (VQLA…YWLD), 260–280 (KLVL…AIFL), and 288–308 (MAAA…PLLM). Positions 898–948 (GTGRVATARGGDAASAPPPGAGGPAPPQAVPPPRTTQPPAAPPRGPDVPPA) are disordered. Pro residues predominate over residues 913–946 (APPPGAGGPAPPQAVPPPRTTQPPAAPPRGPDVP).

It belongs to the UPF0182 family.

It is found in the cell membrane. This chain is UPF0182 protein MRA_0066, found in Mycobacterium tuberculosis (strain ATCC 25177 / H37Ra).